A 155-amino-acid polypeptide reads, in one-letter code: 3-hydroxyacyl-[acyl-carrier-protein] dehydratase FabZ (155 aa).

Histidine 59 is an active-site residue.

The protein belongs to the thioester dehydratase family. FabZ subfamily.

It localises to the cytoplasm. The enzyme catalyses a (3R)-hydroxyacyl-[ACP] = a (2E)-enoyl-[ACP] + H2O. Its function is as follows. Involved in unsaturated fatty acids biosynthesis. Catalyzes the dehydration of short chain beta-hydroxyacyl-ACPs and long chain saturated and unsaturated beta-hydroxyacyl-ACPs. The polypeptide is 3-hydroxyacyl-[acyl-carrier-protein] dehydratase FabZ (Bartonella quintana (strain Toulouse) (Rochalimaea quintana)).